We begin with the raw amino-acid sequence, 512 residues long: Reduced folate transporter (512 aa).

Met-1 carries the N-acetylmethionine modification. Over 1 to 29 the chain is Cytoplasmic; the sequence is MVPTGQVAEKQACEEPRQDRELKSWRWLV. Residues 30-50 traverse the membrane as a helical segment; it reads FYLCFFGFMAQLRPGESFITP. Positions 48 and 49 each coordinate folate. Residues 51 to 62 lie on the Extracellular side of the membrane; sequence YLLERNFTKEQV. Asn-56 carries an N-linked (GlcNAc...) asparagine glycan. A helical transmembrane segment spans residues 63 to 85; that stretch reads TNEIIPMLPYSHLAVLVPIFLLT. The Cytoplasmic segment spans residues 86-89; that stretch reads DYLR. A helical membrane pass occupies residues 90–110; sequence YKPVLVLQCLSFVCVWLLLLL. At 111 to 114 the chain is on the extracellular side; the sequence is GTSV. Residues 115-137 traverse the membrane as a helical segment; that stretch reads VHMQLMEVFYSITMAARIAYSSY. Residues Glu-121 and Arg-131 each contribute to the folate site. The Cytoplasmic segment spans residues 138–151; it reads IFSLVQPSRYQRMA. The chain crosses the membrane as a helical span at residues 152–176; that stretch reads SYSRAAVLLGVFISSVLGQVLVTLG. Val-162 provides a ligand contact to folate. Over 177–181 the chain is Extracellular; it reads GISTY. A helical membrane pass occupies residues 182 to 200; the sequence is MLNCISLGFILFSLSLSLF. The Cytoplasmic portion of the chain corresponds to 201 to 266; that stretch reads LKRPKRSLFF…ELVKNVRQPQ (66 aa). A helical membrane pass occupies residues 267–292; that stretch reads LRLWCLWWVFNSAGYYLITYYVHVLW. Residues Tyr-281, Tyr-282, and Tyr-286 each contribute to the folate site. Topologically, residues 293 to 300 are extracellular; it reads KITDSRLN. Residues 301–323 form a helical membrane-spanning segment; sequence YNGAVDAASTLLSAITAFTAGFV. Over 324 to 329 the chain is Cytoplasmic; the sequence is NIRWAL. Residues 330–350 traverse the membrane as a helical segment; sequence WSKLVIASVIAIQAGLVFCMF. Residues 351 to 353 lie on the Extracellular side of the membrane; sequence QIP. The chain crosses the membrane as a helical span at residues 354–377; sequence DIWVCYVTFVLFRGAYQFLVPIAT. 2 residues coordinate folate: Arg-366 and Gln-370. At 378–391 the chain is on the cytoplasmic side; that stretch reads FQIASSLSKELCAL. The helical transmembrane segment at 392 to 415 threads the bilayer; that stretch reads VFGINTFLATALKTSITLVVSDKR. The required for substrate-binding stretch occupies residues 400–412; that stretch reads ATALKTSITLVVS. Over 416–423 the chain is Extracellular; that stretch reads GLGLQVHQ. The chain crosses the membrane as a helical span at residues 424–448; sequence QFRIYFMYFLTLSIICLAWAGLDGL. Residues 449–512 lie on the Cytoplasmic side of the membrane; sequence RYYRRGRHQP…RADLRVEAKA (64 aa). Ser-466, Ser-471, and Ser-476 each carry phosphoserine. The segment at 479–512 is disordered; that stretch reads DGDLRRPQPSAPQLLPEDGSVEDGRADLRVEAKA. The span at 500–512 shows a compositional bias: basic and acidic residues; sequence EDGRADLRVEAKA.

Belongs to the reduced folate carrier (RFC) transporter (TC 2.A.48) family. As to expression, expressed in liver, heart, brain, spleen, lung and skeletal muscle.

It is found in the cell membrane. The protein localises to the apical cell membrane. Its subcellular location is the basolateral cell membrane. It carries out the reaction 5-amino-1-(5-phospho-beta-D-ribosyl)imidazole-4-carboxamide(in) + (6S)-5-methyl-5,6,7,8-tetrahydrofolate(out) = 5-amino-1-(5-phospho-beta-D-ribosyl)imidazole-4-carboxamide(out) + (6S)-5-methyl-5,6,7,8-tetrahydrofolate(in). In terms of biological role, antiporter that mediates the import of reduced folates, driven by the export of organic anions. Also acts as an importer of immunoreactive cyclic dinucleotides, but with a lower transporter activity. Mechanistically, acts as a secondary active transporter, which exports intracellular organic anions down their concentration gradients to facilitate the uptake of its substrates. Has high affinity for N5-methyltetrahydrofolate, the predominant circulating form of folate. Also mediates the import of antifolate drug methotrexate. 5-amino-4-imidazolecarboxamide riboside (AICAR), when phosphorylated to AICAR monophosphate, can serve as an organic anion for antiporter activity. The chain is Reduced folate transporter from Rattus norvegicus (Rat).